The following is a 395-amino-acid chain: S-adenosylmethionine synthase (395 aa).

H15 contacts ATP. A Mg(2+)-binding site is contributed by D17. E43 is a K(+) binding site. Residues E56 and Q99 each contribute to the L-methionine site. The flexible loop stretch occupies residues 99–109; the sequence is QSADIALGVDE. ATP is bound by residues 174–176, 240–241, D249, 255–256, A272, and K276; these read DGK, RF, and RK. D249 provides a ligand contact to L-methionine. L-methionine is bound at residue K280.

Belongs to the AdoMet synthase family. As to quaternary structure, homotetramer; dimer of dimers. It depends on Mg(2+) as a cofactor. Requires K(+) as cofactor.

It localises to the cytoplasm. The catalysed reaction is L-methionine + ATP + H2O = S-adenosyl-L-methionine + phosphate + diphosphate. Its pathway is amino-acid biosynthesis; S-adenosyl-L-methionine biosynthesis; S-adenosyl-L-methionine from L-methionine: step 1/1. Its function is as follows. Catalyzes the formation of S-adenosylmethionine (AdoMet) from methionine and ATP. The overall synthetic reaction is composed of two sequential steps, AdoMet formation and the subsequent tripolyphosphate hydrolysis which occurs prior to release of AdoMet from the enzyme. This Alkaliphilus oremlandii (strain OhILAs) (Clostridium oremlandii (strain OhILAs)) protein is S-adenosylmethionine synthase.